We begin with the raw amino-acid sequence, 282 residues long: Acetylglutamate kinase (282 aa).

Substrate contacts are provided by residues 62-63, Arg84, and Asn178; that span reads GG. L-arginine-binding positions include Lys196, Ser214, and 266-269; that span reads EIFS.

Homohexamer.

Its subcellular location is the cytoplasm. It catalyses the reaction N-acetyl-L-glutamate + ATP = N-acetyl-L-glutamyl 5-phosphate + ADP. It functions in the pathway amino-acid biosynthesis; L-arginine biosynthesis; N(2)-acetyl-L-ornithine from L-glutamate: step 2/4. Its activity is regulated as follows. Allosterically inhibited by arginine. In terms of biological role, catalyzes the ATP-dependent phosphorylation of N-acetyl-L-glutamate. The polypeptide is Acetylglutamate kinase (Thermotoga maritima (strain ATCC 43589 / DSM 3109 / JCM 10099 / NBRC 100826 / MSB8)).